Consider the following 273-residue polypeptide: Undecaprenyl-diphosphatase (273 aa).

The next 7 helical transmembrane spans lie at 6–26 (SLLI…LPVS), 45–65 (AKTF…VMFW), 90–110 (LTLI…LVFH), 116–136 (LFNP…LIAA), 190–210 (YAAS…ATVL), 222–242 (ADIP…LIAI), and 252–272 (ISFI…YVVF).

Belongs to the UppP family.

Its subcellular location is the cell inner membrane. The enzyme catalyses di-trans,octa-cis-undecaprenyl diphosphate + H2O = di-trans,octa-cis-undecaprenyl phosphate + phosphate + H(+). Catalyzes the dephosphorylation of undecaprenyl diphosphate (UPP). Confers resistance to bacitracin. The chain is Undecaprenyl-diphosphatase from Salmonella heidelberg (strain SL476).